Here is a 122-residue protein sequence, read N- to C-terminus: Glycine cleavage system H protein (122 aa).

One can recognise a Lipoyl-binding domain in the interval 19 to 101 (MVTVGVTHYA…ETEGWLWKMT (83 aa)). The residue at position 60 (Lys60) is an N6-lipoyllysine.

It belongs to the GcvH family. As to quaternary structure, the glycine cleavage system is composed of four proteins: P, T, L and H. Requires (R)-lipoate as cofactor.

In terms of biological role, the glycine cleavage system catalyzes the degradation of glycine. The H protein shuttles the methylamine group of glycine from the P protein to the T protein. The polypeptide is Glycine cleavage system H protein (Bartonella tribocorum (strain CIP 105476 / IBS 506)).